Consider the following 140-residue polypeptide: Nucleoside diphosphate kinase (140 aa).

ATP-binding residues include lysine 11, phenylalanine 59, arginine 87, threonine 93, arginine 104, and asparagine 114. Histidine 117 acts as the Pros-phosphohistidine intermediate in catalysis.

This sequence belongs to the NDK family. In terms of assembly, homotetramer. Mg(2+) serves as cofactor.

The protein localises to the cytoplasm. The enzyme catalyses a 2'-deoxyribonucleoside 5'-diphosphate + ATP = a 2'-deoxyribonucleoside 5'-triphosphate + ADP. It catalyses the reaction a ribonucleoside 5'-diphosphate + ATP = a ribonucleoside 5'-triphosphate + ADP. Its function is as follows. Major role in the synthesis of nucleoside triphosphates other than ATP. The ATP gamma phosphate is transferred to the NDP beta phosphate via a ping-pong mechanism, using a phosphorylated active-site intermediate. The polypeptide is Nucleoside diphosphate kinase (Granulibacter bethesdensis (strain ATCC BAA-1260 / CGDNIH1)).